Consider the following 251-residue polypeptide: uncharacterized protein (251 aa).

Residues 1–25 (MRKKKFLSRFSFSSLFLLCGTLLSA) form the signal peptide. The N-palmitoyl cysteine moiety is linked to residue Cys26. Cys26 carries the S-diacylglycerol cysteine lipid modification.

The protein belongs to the MG439/MG440 family.

Its subcellular location is the cell membrane. This is an uncharacterized protein from Mycoplasma pneumoniae (strain ATCC 29342 / M129 / Subtype 1) (Mycoplasmoides pneumoniae).